Reading from the N-terminus, the 81-residue chain is Sulfur carrier protein TusA (81 aa).

Catalysis depends on C19, which acts as the Cysteine persulfide intermediate.

The protein belongs to the sulfur carrier protein TusA family. As to quaternary structure, interacts with IscS.

The protein localises to the cytoplasm. It functions in the pathway tRNA modification. Sulfur carrier protein involved in sulfur trafficking in the cell. Part of a sulfur-relay system required for 2-thiolation during synthesis of 2-thiouridine of the modified wobble base 5-methylaminomethyl-2-thiouridine (mnm(5)s(2)U) in tRNA. Interacts with IscS and stimulates its cysteine desulfurase activity. Accepts an activated sulfur from IscS, which is then transferred to TusD, and thus determines the direction of sulfur flow from IscS to 2-thiouridine formation. Also appears to be involved in sulfur transfer for the biosynthesis of molybdopterin. The protein is Sulfur carrier protein TusA of Shigella boydii serotype 18 (strain CDC 3083-94 / BS512).